The chain runs to 418 residues: NADH-quinone oxidoreductase subunit D (418 aa).

This sequence belongs to the complex I 49 kDa subunit family. As to quaternary structure, NDH-1 is composed of 14 different subunits. Subunits NuoB, C, D, E, F, and G constitute the peripheral sector of the complex.

It localises to the cell inner membrane. It catalyses the reaction a quinone + NADH + 5 H(+)(in) = a quinol + NAD(+) + 4 H(+)(out). In terms of biological role, NDH-1 shuttles electrons from NADH, via FMN and iron-sulfur (Fe-S) centers, to quinones in the respiratory chain. The immediate electron acceptor for the enzyme in this species is believed to be ubiquinone. Couples the redox reaction to proton translocation (for every two electrons transferred, four hydrogen ions are translocated across the cytoplasmic membrane), and thus conserves the redox energy in a proton gradient. The polypeptide is NADH-quinone oxidoreductase subunit D (Methylacidiphilum infernorum (isolate V4) (Methylokorus infernorum (strain V4))).